The chain runs to 466 residues: Asparagine--tRNA ligase (466 aa).

This sequence belongs to the class-II aminoacyl-tRNA synthetase family. In terms of assembly, homodimer.

The protein localises to the cytoplasm. The enzyme catalyses tRNA(Asn) + L-asparagine + ATP = L-asparaginyl-tRNA(Asn) + AMP + diphosphate + H(+). The sequence is that of Asparagine--tRNA ligase from Photobacterium profundum (strain SS9).